A 355-amino-acid chain; its full sequence is Protein RecA (355 aa).

An ATP-binding site is contributed by 67 to 74 (GPESSGKT). The disordered stretch occupies residues 335 to 355 (NSLVSDVESEDEGASESNEEF). Acidic residues predominate over residues 341–355 (VESEDEGASESNEEF).

The protein belongs to the RecA family.

The protein localises to the cytoplasm. In terms of biological role, can catalyze the hydrolysis of ATP in the presence of single-stranded DNA, the ATP-dependent uptake of single-stranded DNA by duplex DNA, and the ATP-dependent hybridization of homologous single-stranded DNAs. It interacts with LexA causing its activation and leading to its autocatalytic cleavage. The chain is Protein RecA from Sodalis glossinidius.